Here is a 175-residue protein sequence, read N- to C-terminus: Ribosome maturation factor RimM (175 aa).

In terms of domain architecture, PRC barrel spans 97-169 (EDKFYFHEII…TVRVITPEGL (73 aa)).

It belongs to the RimM family. As to quaternary structure, binds ribosomal protein uS19.

It is found in the cytoplasm. Functionally, an accessory protein needed during the final step in the assembly of 30S ribosomal subunit, possibly for assembly of the head region. Essential for efficient processing of 16S rRNA. May be needed both before and after RbfA during the maturation of 16S rRNA. It has affinity for free ribosomal 30S subunits but not for 70S ribosomes. The polypeptide is Ribosome maturation factor RimM (Christiangramia forsetii (strain DSM 17595 / CGMCC 1.15422 / KT0803) (Gramella forsetii)).